A 752-amino-acid chain; its full sequence is Protein WEAK CHLOROPLAST MOVEMENT UNDER BLUE LIGHT-like 2 (752 aa).

Ser-143 carries the phosphoserine modification. Coiled-coil stretches lie at residues 186 to 557 (ERRK…SRAS) and 596 to 651 (ELSK…KEAM). The disordered stretch occupies residues 476–495 (KHDLSETRQRNREDTREEKC). Over residues 653–675 (KVEKARDGKVGMDHELRKWRSDN) the composition is skewed to basic and acidic residues. The interval 653–733 (KVEKARDGKV…ETETKKKKKR (81 aa)) is disordered. Residues 690-723 (KSKSALHQPTTFTFGEQASSSNVTPQASSSNVTP) show a composition bias toward polar residues.

It belongs to the WEB family.

This is Protein WEAK CHLOROPLAST MOVEMENT UNDER BLUE LIGHT-like 2 (WEL2) from Arabidopsis thaliana (Mouse-ear cress).